The sequence spans 238 residues: Glutamine amidotransferase-like protein chyE (238 aa).

In terms of domain architecture, Glutamine amidotransferase type-1 spans 8-238 (KIAVLINTPP…LERVLQWLSE (231 aa)). C102 acts as the Nucleophile in catalysis. Residues H189 and E191 contribute to the active site.

This sequence belongs to the peptidase C26 family.

It participates in pigment biosynthesis. In terms of biological role, glutamine amidotransferase-like protein; part of the gene cluster that mediates the biosynthesis of the yellow pigment chrysogine. the NRPS chyA mediates the condensation of anthranilic acid and alanine into the intermediate 2-(2-aminopropanamido)benzoic acid. The remainder of the pathway is highly branched yielding at least 13 chrysogine-related compounds. The malonyl transferase chyE converts 2-(2-aminopropanamido)benzoic acid and 2-(2-aminopropanamido)benzamidine into 2-(2-(2-carboxyacetamido)propanamido)benzoic acid and 3-((1-((2-carbamoylphenyl)amino)-1-oxopropan-2-yl)amino)-3-oxopropanoic acid, respectively. ChyD is an amidase, being responsible for the amidation of the carboxylic acid moiety of 2-(2-aminopropanamido)benzoic acid, 2-(2-(2-carboxyacetamido)propanamido)benzoic acid and 2-(2-((4-amino-1-carboxy-4-oxobutyl)amino)propanamido)benzoic acid. ChyC is involved in the same reactions as ChyD, but plays a more minor role in the amidation reactions compared to chyD. The oxidoreductases chyH and chyM are involved in oxidation reactions that form N-pyruvoylanthranilamide from 2-(2-aminopropanamido)benzamidine and (1-((2-carbamoylphenyl)amino)-1-oxopropan-2-yl)glutamine, respectively. N-pyruvoylanthranilamide is further converted via two further branches in the pathway, yielding chrysogine and additional chrysogine-related coumpounds. Chrysogine is likely formed by a spontaneous ring closure from N-pyruvoylanthranilamide. The chain is Glutamine amidotransferase-like protein chyE from Penicillium rubens (strain ATCC 28089 / DSM 1075 / NRRL 1951 / Wisconsin 54-1255) (Penicillium chrysogenum).